A 531-amino-acid chain; its full sequence is GPI alpha-1,2-mannosyltransferase 3 (531 aa).

Asparagine 84 is a glycosylation site (N-linked (GlcNAc...) asparagine). A run of 3 helical transmembrane segments spans residues 99-119 (GLRGFSYPLMFAAIYKVLYLL), 124-144 (VWFLIWIPRLAQAVLSGIADV), and 174-196 (YCATRTLTNTMEAVLSTFALYYY). Asparagine 204 is a glycosylation site (N-linked (GlcNAc...) asparagine). A run of 6 helical transmembrane segments spans residues 210-230 (LICVALAFLIRPTAVILWIPL), 249-269 (YLPIGILTLAASLTVDRIFFG), 303-323 (GVPVILCTHLPFFIHGCMVTP), 328-348 (ILLVAVAWTVLTYSALSHKEF), 350-370 (FIYPVLPVCMVFCGFSFSNLK), and 375-395 (AAVGFLVLSNLFPALYTGLIH). 2 N-linked (GlcNAc...) asparagine glycosylation sites follow: asparagine 414 and asparagine 476.

The protein belongs to the glycosyltransferase 22 family. PIGB subfamily.

It localises to the endoplasmic reticulum membrane. It participates in glycolipid biosynthesis; glycosylphosphatidylinositol-anchor biosynthesis. Alpha-1,2-mannosyltransferase that catalyzes the transfer of the third mannose, via an alpha-1,2 bond, from a dolichol-phosphate-mannose (Dol-P-Man) to an alpha-D-Man-(1-&gt;6)-2-PEtn-alpha-D-Man-(1-&gt;4)-alpha-D-GlcN-(1-&gt;6)-(1-radyl,2-acyl-sn-glycero-3-phospho)-2-acyl-inositol intermediate to generate an alpha-D-Man-(1-&gt;2)-alpha-D-Man-(1-&gt;6)-2-PEtn-alpha-D-Man-(1-&gt;4)-alpha-D-GlcN-(1-&gt;6)-(1-radyl,2-acyl-sn-glycero-3-phospho)-2-acyl-inositol (also termed H6) and participates in the nineth step of the glycosylphosphatidylinositol-anchor biosynthesis. May also add the third mannose to an alpha-D-Man-(1-&gt;6)-alpha-D-Man-(1-&gt;4)-alpha-D-GlcN-(1-&gt;6)-(1-radyl,2-acyl-sn-glycero-3-phospho)-2-acyl-inositol (also termed H3) intermediate generating an alpha-D-Man-(1-&gt;2)-alpha-D-Man-(1-&gt;6)-alpha-D-Man-(1-&gt;4)-alpha-D-GlcN-(1-&gt;6)-(1-radyl,2-acyl-sn-glycero-3-phospho)-2-acyl-inositol (also termed H4). The polypeptide is GPI alpha-1,2-mannosyltransferase 3 (Xenopus laevis (African clawed frog)).